The following is a 595-amino-acid chain: Guanylate-binding protein 3 (595 aa).

Residues 1–309 (MAPEIHMTGP…NAISRGDLPC (309 aa)) are GTPase domain (Globular). Residues 35 to 276 (TQPVVVVAIV…FCSYIFSNSK (242 aa)) enclose the GB1/RHD3-type G domain. Residues 45–52 (GLYRTGKS), 67–69 (LGS), and 97–101 (DTEGL) contribute to the GTP site. Positions 482-595 (EKEKEIEVEC…KRYMSHKLKI (114 aa)) form a coiled coil.

The protein belongs to the TRAFAC class dynamin-like GTPase superfamily. GB1/RHD3 GTPase family. GB1 subfamily. Heterodimer with other family members, including GBP1, GBP2 and GBP5. Dimerization regulates subcellular location.

It is found in the cytoplasm. Its subcellular location is the perinuclear region. The protein localises to the golgi apparatus membrane. It catalyses the reaction GTP + H2O = GDP + phosphate + H(+). Functionally, interferon (IFN)-inducible GTPase that plays important roles in innate immunity against a diverse range of bacterial, viral and protozoan pathogens. Hydrolyzes GTP very efficiently; GDP rather than GMP is the major reaction product. Following infection, recruited to the pathogen-containing vacuoles or vacuole-escaped bacteria and acts as a positive regulator of inflammasome assembly by promoting the release of inflammasome ligands from bacteria. Acts by promoting lysis of pathogen-containing vacuoles, releasing pathogens into the cytosol. Following pathogen release in the cytosol, promotes recruitment of proteins that mediate bacterial cytolysis: this liberates ligands that are detected by inflammasomes, such as lipopolysaccharide (LPS) that activates the non-canonical CASP4/CASP11 inflammasome or double-stranded DNA (dsDNA) that activates the AIM2 inflammasome. Exhibits antiviral activity against influenza virus. Its function is as follows. Shows the most prominent antiviral activity in epithelial cells. The chain is Guanylate-binding protein 3 (GBP3) from Homo sapiens (Human).